We begin with the raw amino-acid sequence, 1004 residues long: Caspase recruitment domain-containing protein 14 (1004 aa).

Positions 15–107 (DEETLWEMME…DVYTLVTGLQ (93 aa)) constitute a CARD domain. Positions 128–409 (LAGAIGSLQE…RTQLRQLQAE (282 aa)) form a coiled coil. Residues 409 to 568 (EPPGVLKQEA…RRPARRILSQ (160 aa)) are maintains the protein in an inactive state. Residue Ser544 is modified to Phosphoserine. The PDZ domain occupies 568–658 (QVTMLAFQGD…FCCLSVKVNT (91 aa)). Residues 807–990 (AESCLTLVPY…LLSCVRQAIA (184 aa)) enclose the Guanylate kinase-like domain.

Interacts (via CARD domain) with BCL10 (via CARD domain). Forms a complex with MALT1 and BCL10; resulting in the formation of a CBM (CARD14-BLC10-MALT1) complex. Interacts with TRAF2, TRAF3 and TRAF6. As to expression, isoform 1 is detected in placenta and epidermal keratinocytes. Isoform 2 is detected in leukocytes and fetal brain.

The protein resides in the cytoplasm. In terms of biological role, acts as a scaffolding protein that can activate the inflammatory transcription factor NF-kappa-B and p38/JNK MAP kinase signaling pathways. Forms a signaling complex with BCL10 and MALT1, and activates MALT1 proteolytic activity and inflammatory gene expression. MALT1 is indispensable for CARD14-induced activation of NF-kappa-B and p38/JNK MAP kinases. May play a role in signaling mediated by TRAF2, TRAF3 and TRAF6 and protects cells against apoptosis. Its function is as follows. Not able to activate the inflammatory transcription factor NF-kappa-B and may function as a dominant negative regulator. The sequence is that of Caspase recruitment domain-containing protein 14 (CARD14) from Homo sapiens (Human).